Reading from the N-terminus, the 439-residue chain is Serine hydroxymethyltransferase (439 aa).

126–128 (AHV) lines the (6S)-5,6,7,8-tetrahydrofolate pocket. At lysine 232 the chain carries N6-(pyridoxal phosphate)lysine.

It belongs to the SHMT family. In terms of assembly, homodimer. The cofactor is pyridoxal 5'-phosphate.

It localises to the cytoplasm. Its pathway is amino-acid biosynthesis; glycine biosynthesis; glycine from L-serine: step 1/1. Functionally, catalyzes the reversible interconversion of serine and glycine with a modified folate serving as the one-carbon carrier. Also exhibits a pteridine-independent aldolase activity toward beta-hydroxyamino acids, producing glycine and aldehydes, via a retro-aldol mechanism. The protein is Serine hydroxymethyltransferase of Staphylothermus marinus (strain ATCC 43588 / DSM 3639 / JCM 9404 / F1).